We begin with the raw amino-acid sequence, 198 residues long: Na(+)-translocating NADH-quinone reductase subunit E (198 aa).

The next 6 membrane-spanning stretches (helical) occupy residues 11–31, 35–55, 77–97, 110–130, 140–160, and 176–196; these read AVFIENMALSFFLGMCTFLAV, VSTAFGLGIAVTFVLGIAVPV, FLNFITFIGVIAGLVQILEMV, GIFLPLIAVNCAIFGGVSFMV, IVYGFGSGLGWMLAIVALAGL, and LGITFISVGLMALGFMSFSGI.

This sequence belongs to the NqrDE/RnfAE family. Composed of six subunits; NqrA, NqrB, NqrC, NqrD, NqrE and NqrF.

The protein localises to the cell inner membrane. It catalyses the reaction a ubiquinone + n Na(+)(in) + NADH + H(+) = a ubiquinol + n Na(+)(out) + NAD(+). Its function is as follows. NQR complex catalyzes the reduction of ubiquinone-1 to ubiquinol by two successive reactions, coupled with the transport of Na(+) ions from the cytoplasm to the periplasm. NqrA to NqrE are probably involved in the second step, the conversion of ubisemiquinone to ubiquinol. The polypeptide is Na(+)-translocating NADH-quinone reductase subunit E (Haemophilus influenzae (strain 86-028NP)).